The sequence spans 812 residues: Phenylalanine--tRNA ligase beta subunit (812 aa).

Residues 39-155 (SKTFAPFTIA…ADAPVGAGYA (117 aa)) enclose the tRNA-binding domain. A B5 domain is found at 405 to 480 (PEDRVIDFPL…RIVGVDKVPM (76 aa)). 4 residues coordinate Mg(2+): Asp-458, Asp-464, Glu-467, and Glu-468. Residues 718 to 811 (PAFQPVSRDF…VAKRTGGSLR (94 aa)) form the FDX-ACB domain.

It belongs to the phenylalanyl-tRNA synthetase beta subunit family. Type 1 subfamily. As to quaternary structure, tetramer of two alpha and two beta subunits. The cofactor is Mg(2+).

The protein resides in the cytoplasm. The catalysed reaction is tRNA(Phe) + L-phenylalanine + ATP = L-phenylalanyl-tRNA(Phe) + AMP + diphosphate + H(+). This Nitrobacter winogradskyi (strain ATCC 25391 / DSM 10237 / CIP 104748 / NCIMB 11846 / Nb-255) protein is Phenylalanine--tRNA ligase beta subunit.